Reading from the N-terminus, the 727-residue chain is Translation initiation factor IF-2, mitochondrial (727 aa).

A mitochondrion-targeting transit peptide spans 1 to 29 (MNQKLLKLENLLRFHTIYRQLHSLCQRRA). Positions 178–348 (PRSPVVTIMG…VALAEMLELK (171 aa)) constitute a tr-type G domain. The G1 stretch occupies residues 187 to 194 (GHVDHGKT). 187 to 194 (GHVDHGKT) is a GTP binding site. The segment at 212–216 (GITQH) is G2. Residues 234–237 (DTPG) and 288–291 (NKCD) each bind GTP. The segment at 234–237 (DTPG) is G3. The tract at residues 288–291 (NKCD) is G4. The segment at 324 to 326 (SAL) is G5. Thr-688 is modified (phosphothreonine).

It belongs to the TRAFAC class translation factor GTPase superfamily. Classic translation factor GTPase family. IF-2 subfamily. Monomer. In terms of tissue distribution, expressed in all tissues examined. Highest level in skeletal muscle.

The protein localises to the mitochondrion. One of the essential components for the initiation of protein synthesis. Protects formylmethionyl-tRNA from spontaneous hydrolysis and promotes its binding to the 30S ribosomal subunits. Also involved in the hydrolysis of GTP during the formation of the 70S ribosomal complex. In Homo sapiens (Human), this protein is Translation initiation factor IF-2, mitochondrial (MTIF2).